A 125-amino-acid chain; its full sequence is Fluoride-specific ion channel FluC (125 aa).

4 consecutive transmembrane segments (helical) span residues 7–27, 36–56, 63–83, and 96–116; these read FFIV…MAVV, GFPY…GFLS, PYGR…FSTF, and FIFA…GVFC. Na(+) is bound by residues glycine 75 and threonine 78.

Belongs to the fluoride channel Fluc/FEX (TC 1.A.43) family.

It is found in the cell inner membrane. It catalyses the reaction fluoride(in) = fluoride(out). Its activity is regulated as follows. Na(+) is not transported, but it plays an essential structural role and its presence is essential for fluoride channel function. In terms of biological role, fluoride-specific ion channel. Important for reducing fluoride concentration in the cell, thus reducing its toxicity. The chain is Fluoride-specific ion channel FluC from Elusimicrobium minutum (strain Pei191).